The sequence spans 313 residues: Formate-nitrite transporter (313 aa).

Topologically, residues 1–46 (MTKGSKYTIDPISVKTACTSEESYIRCVEYGKGKAHYPNLSLLAKA) are cytoplasmic. The chain crosses the membrane as a helical span at residues 47-67 (ILAGVFVGVCAHASGIAGGHF). At 68–77 (YYHKLREHVG) the chain is on the extracellular side. Residues 78–98 (ISMSAFVYGFTFPIAFLCIIA) form a helical membrane-spanning segment. The Cytoplasmic segment spans residues 99-127 (TGSDLFTGNTLAVTTALLQRKVTLLEYLR). The chain crosses the membrane as a helical span at residues 128 to 148 (VMSISLFGNYVGAVSFAFFVS). Residues 149–184 (HLSGAFKKHEEIGKNHIFQFLNDIAEKKVSHTFVQC) lie on the Extracellular side of the membrane. Residues 185–205 (VCLAIGCNIFVCLAVYFVLTI) form a helical membrane-spanning segment. Residues 206-210 (KDGSG) are Cytoplasmic-facing. The helical transmembrane segment at 211 to 231 (MVFSVFFAVYAFAIAGYEHII) threads the bilayer. Over 232-256 (ANMYTLNLALMIEANVDWTKVYVDN) the chain is Extracellular. Residues 257–277 (LLPTLIGNYIAGAIVLACPLF) form a helical membrane-spanning segment. Topologically, residues 278 to 313 (YIYRHSYSDYEKTRGDGGNSGLKSLSIEMQNGSSGR) are cytoplasmic. Residues 290 to 313 (TRGDGGNSGLKSLSIEMQNGSSGR) form a disordered region. Over residues 298-313 (GLKSLSIEMQNGSSGR) the composition is skewed to polar residues.

This sequence belongs to the FNT transporter (TC 1.A.16) family. Homopentamer.

Its subcellular location is the cell membrane. The protein localises to the vacuole membrane. It catalyses the reaction (S)-lactate(in) + H(+)(in) = (S)-lactate(out) + H(+)(out). It carries out the reaction formate(in) + H(+)(in) = formate(out) + H(+)(out). The catalysed reaction is pyruvate(out) + H(+)(out) = pyruvate(in) + H(+)(in). The enzyme catalyses acetate(out) + H(+)(out) = acetate(in) + H(+)(in). Inhibited by the Malaria Box compound MMV007839 and its derivatives BH296 and BH267.meta. Monocarboxylate-proton symporter that mediates the efflux of the waste product lactate in the intraerythrocytic parasites; active in acidic-to-neutral pH range. Transports L-lactate. The protein is Formate-nitrite transporter of Plasmodium vivax.